A 98-amino-acid polypeptide reads, in one-letter code: NADH-ubiquinone oxidoreductase chain 4L (98 aa).

3 consecutive transmembrane segments (helical) span residues 1-21 (MTSI…GVLI), 28-48 (STLL…ALLI), and 59-79 (APLI…ALLV).

This sequence belongs to the complex I subunit 4L family. As to quaternary structure, core subunit of respiratory chain NADH dehydrogenase (Complex I) which is composed of 45 different subunits.

The protein localises to the mitochondrion inner membrane. The enzyme catalyses a ubiquinone + NADH + 5 H(+)(in) = a ubiquinol + NAD(+) + 4 H(+)(out). Core subunit of the mitochondrial membrane respiratory chain NADH dehydrogenase (Complex I) which catalyzes electron transfer from NADH through the respiratory chain, using ubiquinone as an electron acceptor. Part of the enzyme membrane arm which is embedded in the lipid bilayer and involved in proton translocation. This Vombatus ursinus (Common wombat) protein is NADH-ubiquinone oxidoreductase chain 4L (MT-ND4L).